A 28-amino-acid chain; its full sequence is U-actitoxin-Ate1 (28 aa).

The signal sequence occupies residues 1 to 15; that stretch reads MSLILIFFAFTVLKS. A disulfide bridge connects residues Cys20 and Cys26.

In terms of assembly, monomer in solution. Post-translationally, may be N-glycosylated at Asn-22. Activity with this modification has not be tested. Highly expressed in the tentacles. Weakly expressed in acrorhagi and mesenteric filaments.

Its subcellular location is the secreted. It localises to the nematocyst. Its function is as follows. Probable toxin expected to be employed in prey capture and/or defense against predators (based on its abundance in tentacles). Has only a weak affinity for lipid membranes. Shows moderate cytotoxic activity against breast cancer cell lines (MCF-7 and MDA-MB-231). This is U-actitoxin-Ate1 from Actinia tenebrosa (Australian red waratah sea anemone).